Reading from the N-terminus, the 248-residue chain is Small ribosomal subunit protein uS2 (248 aa).

The protein belongs to the universal ribosomal protein uS2 family.

The sequence is that of Small ribosomal subunit protein uS2 from Alkalilimnicola ehrlichii (strain ATCC BAA-1101 / DSM 17681 / MLHE-1).